The primary structure comprises 117 residues: Tyrosine-protein phosphatase 25 (117 aa).

A Tyrosine-protein phosphatase domain is found at 1-117 (WLMIIEQKCN…DLIGQSPIVV (117 aa)). Residue Asp85 participates in substrate binding.

The protein belongs to the protein-tyrosine phosphatase family.

It carries out the reaction O-phospho-L-tyrosyl-[protein] + H2O = L-tyrosyl-[protein] + phosphate. This chain is Tyrosine-protein phosphatase 25 (STY-25), found in Styela plicata (Wrinkled sea squirt).